The following is a 352-amino-acid chain: Ion-translocating oxidoreductase complex subunit D (352 aa).

Helical transmembrane passes span 20–40, 42–62, 68–88, 89–109, and 123–143; these read IMLL…WFFG, GTLV…ALVL, PIAA…LAVS, IPPL…VIIA, and PAMI…TNWL. T187 carries the post-translational modification FMN phosphoryl threonine. 5 consecutive transmembrane segments (helical) span residues 217 to 237, 244 to 264, 267 to 287, 301 to 321, and 322 to 342; these read GAGW…LLAI, IPVS…LFAP, LASP…FFIL, LIFG…GGYP, and DGVA…DYYT.

This sequence belongs to the NqrB/RnfD family. As to quaternary structure, the complex is composed of six subunits: RsxA, RsxB, RsxC, RsxD, RsxE and RsxG. FMN is required as a cofactor.

It is found in the cell inner membrane. Functionally, part of a membrane-bound complex that couples electron transfer with translocation of ions across the membrane. Required to maintain the reduced state of SoxR. The sequence is that of Ion-translocating oxidoreductase complex subunit D from Escherichia fergusonii (strain ATCC 35469 / DSM 13698 / CCUG 18766 / IAM 14443 / JCM 21226 / LMG 7866 / NBRC 102419 / NCTC 12128 / CDC 0568-73).